Here is a 300-residue protein sequence, read N- to C-terminus: Ribosomal RNA small subunit methyltransferase H (300 aa).

S-adenosyl-L-methionine is bound by residues 33 to 35 (GGH), aspartate 52, phenylalanine 79, aspartate 100, and glutamine 107.

The protein belongs to the methyltransferase superfamily. RsmH family.

It is found in the cytoplasm. The catalysed reaction is cytidine(1402) in 16S rRNA + S-adenosyl-L-methionine = N(4)-methylcytidine(1402) in 16S rRNA + S-adenosyl-L-homocysteine + H(+). In terms of biological role, specifically methylates the N4 position of cytidine in position 1402 (C1402) of 16S rRNA. The chain is Ribosomal RNA small subunit methyltransferase H from Mycoplasmopsis agalactiae (strain NCTC 10123 / CIP 59.7 / PG2) (Mycoplasma agalactiae).